Reading from the N-terminus, the 124-residue chain is Small ribosomal subunit protein bS16 (124 aa).

Residues 88–124 (VPEQTKQAQPKAKAQERLREAEEKARAAAEAAASAEG) form a disordered region. Residues 100 to 114 (KAQERLREAEEKARA) are compositionally biased toward basic and acidic residues. A compositionally biased stretch (low complexity) spans 115 to 124 (AAEAAASAEG).

Belongs to the bacterial ribosomal protein bS16 family.

This Rhodospirillum rubrum (strain ATCC 11170 / ATH 1.1.1 / DSM 467 / LMG 4362 / NCIMB 8255 / S1) protein is Small ribosomal subunit protein bS16.